The chain runs to 714 residues: Protein artemis (714 aa).

Disordered stretches follow at residues 391 to 500 (ELFD…ESNA), 516 to 577 (ESSE…TVLI), 598 to 617 (ALLS…RWKL), and 638 to 683 (EKDA…LTPD). Polar residues predominate over residues 427 to 440 (NESTESYRANTAYT). A compositionally biased stretch (acidic residues) spans 447 to 468 (VDCEESNDDDDDDDDDDKEDDS). Polar residues-rich tracts occupy residues 484 to 500 (SIAS…ESNA) and 532 to 543 (GSQSLFSDSDGV). A compositionally biased stretch (low complexity) spans 544-561 (SDSTHISSQNSSQSTHIS). Over residues 562 to 577 (EQGSQGWDSQMDTVLI) the composition is skewed to polar residues. Composition is skewed to basic and acidic residues over residues 603–615 (DTPR…DSRW) and 660–670 (RTPDLELKRDS). Ser670 bears the Phosphoserine; by ATM mark.

Belongs to the DNA repair metallo-beta-lactamase (DRMBL) family. In terms of assembly, interacts with PRKDC. Phosphorylation on undefined residues by PRKDC may stimulate endonucleolytic activity on 5' and 3' hairpins and overhangs. PRKDC must remain present, even after phosphorylation, for efficient hairpin opening.

The protein resides in the nucleus. In terms of biological role, required for V(D)J recombination, the process by which exons encoding the antigen-binding domains of immunoglobulins and T-cell receptor proteins are assembled from individual V, (D), and J gene segments. V(D)J recombination is initiated by the lymphoid specific RAG endonuclease complex, which generates site specific DNA double strand breaks (DSBs). These DSBs present two types of DNA end structures: hairpin sealed coding ends and phosphorylated blunt signal ends. These ends are independently repaired by the non homologous end joining (NHEJ) pathway to form coding and signal joints respectively. This protein exhibits single-strand specific 5'-3' exonuclease activity in isolation, and acquires endonucleolytic activity on 5' and 3' hairpins and overhangs when in a complex with PRKDC. The latter activity is required specifically for the resolution of closed hairpins prior to the formation of the coding joint. May also be required for the repair of complex DSBs induced by ionizing radiation, which require substantial end-processing prior to religation by NHEJ. In Gallus gallus (Chicken), this protein is Protein artemis (DCLRE1C).